A 391-amino-acid chain; its full sequence is DNA-directed RNA polymerase subunit Rpo1C (391 aa).

It belongs to the RNA polymerase beta' chain family. As to quaternary structure, part of the RNA polymerase complex.

Its subcellular location is the cytoplasm. It carries out the reaction RNA(n) + a ribonucleoside 5'-triphosphate = RNA(n+1) + diphosphate. In terms of biological role, DNA-dependent RNA polymerase (RNAP) catalyzes the transcription of DNA into RNA using the four ribonucleoside triphosphates as substrates. Forms part of the jaw domain. The protein is DNA-directed RNA polymerase subunit Rpo1C of Thermococcus onnurineus (strain NA1).